The sequence spans 231 residues: Glycerol-3-phosphate acyltransferase (231 aa).

6 consecutive transmembrane segments (helical) span residues 6–26, 55–75, 95–115, 130–150, 152–172, and 196–216; these read FLFL…LVIG, WGIL…TIFL, LTMK…FSLF, IITS…AIFL, LFGY…IFLW, and LFYF…YSNI.

It belongs to the PlsY family. In terms of assembly, probably interacts with PlsX.

The protein localises to the cell membrane. The catalysed reaction is an acyl phosphate + sn-glycerol 3-phosphate = a 1-acyl-sn-glycero-3-phosphate + phosphate. It participates in lipid metabolism; phospholipid metabolism. Its function is as follows. Catalyzes the transfer of an acyl group from acyl-phosphate (acyl-PO(4)) to glycerol-3-phosphate (G3P) to form lysophosphatidic acid (LPA). This enzyme utilizes acyl-phosphate as fatty acyl donor, but not acyl-CoA or acyl-ACP. This is Glycerol-3-phosphate acyltransferase from Aster yellows witches'-broom phytoplasma (strain AYWB).